The chain runs to 839 residues: MKGKKDGLNKQVHIYSIDTSAFYNDQENKLHNKILKSYRYRDHLRKLEHVDKKHKKYITQRIISLKEKLYNAFNDHNQIRTLRTDSLKDNNVISLFDSVLTRTLGIKENSLSEEIMVVQTYHFQILRDIIDKGFIHNNEKYVYFTSSAGQIRTKKSCFIKQSTLDKYQNALTCGLSVEHINAQGGSSINKWNSYMALSNSASSSWEIDIDKAIVVNDLETNVSSLVDYIDRDTYEITRKIMDIPIEHTDGCGMMLPSLSQKSFMVRLPWVKGLLVPFDFRKFAEKHSSFIVKDVYGKEWDIIKDDIQIIFTKSQFKMWKYYDSWDDYRYKFKKYGCLGAKLNEEDPSVEGKLTYQMLQTLTDITDEELKQISSKTVSEITQLGTDKETMMKVLGATEKNKHKTSLQEALLIYPELLNDDHTKEIIKNKKKSMIKDAKSGKLLVSDARYTYLCPDLYAFCERLFLGIESPKGLLSGSDVHCSLYDEGYIDILRSPHLFREHGVRWNKKNEEYEKWFITPGVYTSIHDPISKLLQFDNDGDKALIISDELIVNIAKRNMADIVPLYYEMSVAQKQEINSRNIYEALTLAYGINIGEYSNNITKIWNSDNINLDVIKWLCMENNFTIDFAKTLFMPTRPDHVDEKIKDYIKNKVPHFFINAKDKEEHSVESINESTVNKLDSIIPSDRINFAAVAGKFDYRFLLKNKEIKLNEAVINEYKRLDRNKKWLMNDEEAKPGQKLYVYKIIKQKLLEIHNDDGFITDVLVKHLYKKKSKYKSTLWECFGDIVLENIKHNLKTFKGCCICGKAFKPTSNKAKYCQSCGKKKERDKYKKYNKKRINHR.

Residues aspartate 535, aspartate 537, and aspartate 539 each contribute to the Mg(2+) site.

Belongs to the YRH RNA polymerase family. A divalent metal cation is required as a cofactor.

The enzyme catalyses RNA(n) + a ribonucleoside 5'-triphosphate = RNA(n+1) + diphosphate. Its function is as follows. A single subunit DNA-dependent RNA polymerase (RNAP) that catalyzes the transcription of DNA into RNA using the four ribonucleoside triphosphates (rNTPs) as substrates. The enzyme is more highly processive than the multisubunit RNAP from E.coli but is considerably more error-prone. It has no detectable proof-reading function but can perform pyrophosphorolysis. Probably transcribes the late genes of the SPbeta phage starting from yonK. In Bacillus pumilus (Bacillus mesentericus), this protein is DNA-directed RNA polymerase YonO (yonO).